We begin with the raw amino-acid sequence, 205 residues long: High frequency lysogenization protein HflD homolog (205 aa).

It belongs to the HflD family.

Its subcellular location is the cytoplasm. It localises to the cell inner membrane. This chain is High frequency lysogenization protein HflD homolog, found in Shewanella baltica (strain OS155 / ATCC BAA-1091).